Reading from the N-terminus, the 261-residue chain is MSAALTANAASFAIGSVALVERVDLRVEPGELIAIVGPNGAGKSTLLRMLSGDVRPTAGAVRMANRDLSTYSPRELAGRRAVLAQHTNVGFPFSVEEIVWMGADIDRRKAAPLFDRAIREVRLEAFRHRDVTTLSGGEQQRTHFARVLLQLWCGEASYGPGLLLLDEPTSSLDIRHQLDLAEMARRCARDGTTVIAILHDLNLAARFADRILMMHQGALTADGTPSAVIRPDLLARVFDVDLSVSRDSTGAPFVLPQLAKR.

An ABC transporter domain is found at leucine 5–aspartate 241. ATP is bound at residue glycine 37 to serine 44.

The protein belongs to the ABC transporter superfamily. Heme (hemin) importer (TC 3.A.1.14.5) family. In terms of assembly, the complex is composed of two ATP-binding proteins (HmuV), two transmembrane proteins (HmuU) and a solute-binding protein (HmuT).

The protein resides in the cell inner membrane. Part of the ABC transporter complex HmuTUV involved in hemin import. Responsible for energy coupling to the transport system. This chain is Hemin import ATP-binding protein HmuV, found in Rhodopseudomonas palustris (strain BisB5).